The chain runs to 413 residues: Floricaula/leafy homolog 1 (413 aa).

Disordered regions lie at residues glutamate 154–threonine 177 and glutamine 191–glutamate 239. Over residues glycine 201–alanine 210 the composition is skewed to basic and acidic residues. The segment covering glutamate 211–asparagine 225 has biased composition (acidic residues). DNA-binding regions lie at residues arginine 238–phenylalanine 242, asparagine 307–tyrosine 314, and tyrosine 378–threonine 381.

It belongs to the FLO/LFY family. Expressed in floral meristems and in indeterminate vegetative meristems.

The protein resides in the nucleus. Probable transcription factor that act to specify determinacy in the progenitor cells for both flowers and leaves. In Nicotiana tabacum (Common tobacco), this protein is Floricaula/leafy homolog 1 (FL1).